The sequence spans 510 residues: NAD(P)H-quinone oxidoreductase subunit 2, chloroplastic (510 aa).

The next 12 membrane-spanning stretches (helical) occupy residues 24–44, 59–79, 99–119, 124–144, 149–169, 183–203, 229–249, 295–315, 323–343, 354–374, 395–415, and 418–438; these read LLLFHGSFIFPECILIFGLIL, WFYFISSTSLIISITALLFRW, IFQFLILLCSTLCIPLSVEYI, MAITEFLLFVLTATLGGMFLC, LITIFVAPECFSLCSYLLSGY, YLLMGGASSSILVHGFSWLYG, ISIALISITVGIGFKLSPAPF, WHLLLEILAILSMILGNLIAI, MLAYSSIGQIGYVIIGIIVGD, YMLFYISMNLGTFACIVLFGL, ALSSALCLLSLGGLPPLAGFF, and LHLFWCGWQAGLYFLVSIGLL.

It belongs to the complex I subunit 2 family. As to quaternary structure, NDH is composed of at least 16 different subunits, 5 of which are encoded in the nucleus.

Its subcellular location is the plastid. It is found in the chloroplast thylakoid membrane. The catalysed reaction is a plastoquinone + NADH + (n+1) H(+)(in) = a plastoquinol + NAD(+) + n H(+)(out). It catalyses the reaction a plastoquinone + NADPH + (n+1) H(+)(in) = a plastoquinol + NADP(+) + n H(+)(out). In terms of biological role, NDH shuttles electrons from NAD(P)H:plastoquinone, via FMN and iron-sulfur (Fe-S) centers, to quinones in the photosynthetic chain and possibly in a chloroplast respiratory chain. The immediate electron acceptor for the enzyme in this species is believed to be plastoquinone. Couples the redox reaction to proton translocation, and thus conserves the redox energy in a proton gradient. The sequence is that of NAD(P)H-quinone oxidoreductase subunit 2, chloroplastic from Ensete ventricosum (Abyssinian banana).